Consider the following 198-residue polypeptide: MIIGAKFITSLVKFDENLSSNFSEVAFLGRSNVGKSSLINSLCKQKNLAKSSATPGKTQLINFFEVTCKRNEEKFNINFIDLPGFGYAKVSKNLKEIWNQNLDEFLKLRTSIKLFIHLIDSRHTHLEIDVNLNDYLKRFLRPDQKILKVFTKCDKLNQSEKAKLKNEFKDSILVSNLNKFGLDSLEDIIINQTLGLDK.

The 175-residue stretch at 21–195 (NFSEVAFLGR…EDIIINQTLG (175 aa)) folds into the EngB-type G domain. Residues 29 to 36 (GRSNVGKS), 56 to 60 (GKTQL), 81 to 84 (DLPG), 151 to 154 (TKCD), and 174 to 176 (VSN) contribute to the GTP site. Mg(2+)-binding residues include serine 36 and threonine 58.

It belongs to the TRAFAC class TrmE-Era-EngA-EngB-Septin-like GTPase superfamily. EngB GTPase family. Mg(2+) is required as a cofactor.

In terms of biological role, necessary for normal cell division and for the maintenance of normal septation. The chain is Probable GTP-binding protein EngB from Campylobacter jejuni subsp. jejuni serotype O:23/36 (strain 81-176).